A 255-amino-acid chain; its full sequence is Ribosomal RNA small subunit methyltransferase A (255 aa).

6 residues coordinate S-adenosyl-L-methionine: histidine 12, leucine 14, glycine 39, glutamate 60, aspartate 81, and asparagine 103.

It belongs to the class I-like SAM-binding methyltransferase superfamily. rRNA adenine N(6)-methyltransferase family. RsmA subfamily.

Its subcellular location is the cytoplasm. It catalyses the reaction adenosine(1518)/adenosine(1519) in 16S rRNA + 4 S-adenosyl-L-methionine = N(6)-dimethyladenosine(1518)/N(6)-dimethyladenosine(1519) in 16S rRNA + 4 S-adenosyl-L-homocysteine + 4 H(+). Its function is as follows. Specifically dimethylates two adjacent adenosines (A1518 and A1519) in the loop of a conserved hairpin near the 3'-end of 16S rRNA in the 30S particle. May play a critical role in biogenesis of 30S subunits. The chain is Ribosomal RNA small subunit methyltransferase A from Variovorax paradoxus (strain S110).